The chain runs to 141 residues: Hemoglobin subunit alpha (141 aa).

The 141-residue stretch at 1-141 folds into the Globin domain; sequence VLSAADKSNV…VSTVLTSKYR (141 aa). The residue at position 3 (Ser3) is a Phosphoserine. N6-succinyllysine occurs at positions 7 and 11. N6-acetyllysine; alternate is present on Lys16. Lys16 carries the N6-succinyllysine; alternate modification. Tyr24 bears the Phosphotyrosine mark. Ser35 carries the phosphoserine modification. An N6-succinyllysine modification is found at Lys40. Ser49 bears the Phosphoserine mark. Residue His58 participates in O2 binding. His87 is a binding site for heme b. Ser102 carries the post-translational modification Phosphoserine. Thr108 bears the Phosphothreonine mark. Ser124 carries the phosphoserine modification. Thr134 and Thr137 each carry phosphothreonine. Ser138 carries the post-translational modification Phosphoserine.

Belongs to the globin family. As to quaternary structure, heterotetramer of two alpha chains and two beta chains. As to expression, red blood cells.

Involved in oxygen transport from the lung to the various peripheral tissues. Its function is as follows. Hemopressin acts as an antagonist peptide of the cannabinoid receptor CNR1. Hemopressin-binding efficiently blocks cannabinoid receptor CNR1 and subsequent signaling. In Felis catus (Cat), this protein is Hemoglobin subunit alpha (HBA).